A 336-amino-acid polypeptide reads, in one-letter code: UPF0324 membrane protein PM1461 (336 aa).

10 helical membrane-spanning segments follow: residues 5–23, 30–52, 62–84, 91–113, 123–140, 153–175, 221–238, 250–271, 275–297, and 310–332; these read TLFL…VNLL, LNAN…NTFY, GVIF…RLTL, GINA…LWLG, IVYL…AAIM, VSIA…PLMY, MIRV…SWLL, ISIP…FSLI, IVAW…LGLT, and PLIL…NVGI.

This sequence belongs to the UPF0324 family.

Its subcellular location is the cell membrane. This chain is UPF0324 membrane protein PM1461, found in Pasteurella multocida (strain Pm70).